The chain runs to 396 residues: Chorismate synthase (396 aa).

Residues Arg41 and Arg47 each contribute to the NADP(+) site. FMN-binding positions include 130–132 (RAS), Gly298, 313–317 (KPIPT), and Arg339.

The protein belongs to the chorismate synthase family. Homotetramer. It depends on FMNH2 as a cofactor.

It carries out the reaction 5-O-(1-carboxyvinyl)-3-phosphoshikimate = chorismate + phosphate. The protein operates within metabolic intermediate biosynthesis; chorismate biosynthesis; chorismate from D-erythrose 4-phosphate and phosphoenolpyruvate: step 7/7. Catalyzes the anti-1,4-elimination of the C-3 phosphate and the C-6 proR hydrogen from 5-enolpyruvylshikimate-3-phosphate (EPSP) to yield chorismate, which is the branch point compound that serves as the starting substrate for the three terminal pathways of aromatic amino acid biosynthesis. This reaction introduces a second double bond into the aromatic ring system. In Syntrophomonas wolfei subsp. wolfei (strain DSM 2245B / Goettingen), this protein is Chorismate synthase.